The primary structure comprises 341 residues: L-threonine 3-dehydrogenase (341 aa).

Cys38 is a Zn(2+) binding site. Active-site charge relay system residues include Thr40 and His43. Zn(2+) contacts are provided by His63, Glu64, Cys93, Cys96, Cys99, and Cys107. NAD(+) contacts are provided by residues Ile175, Asp195, Arg200, 262 to 264, and 286 to 287; these read LGI and IY.

This sequence belongs to the zinc-containing alcohol dehydrogenase family. In terms of assembly, homotetramer. Zn(2+) serves as cofactor.

The protein resides in the cytoplasm. It catalyses the reaction L-threonine + NAD(+) = (2S)-2-amino-3-oxobutanoate + NADH + H(+). The protein operates within amino-acid degradation; L-threonine degradation via oxydo-reductase pathway; glycine from L-threonine: step 1/2. Its function is as follows. Catalyzes the NAD(+)-dependent oxidation of L-threonine to 2-amino-3-ketobutyrate. The polypeptide is L-threonine 3-dehydrogenase (Shewanella baltica (strain OS185)).